The chain runs to 218 residues: Non-structural protein NS3 (218 aa).

It belongs to the orbivirus NS3 family.

Functionally, may play a role in the release of virions from infected cells. This chain is Non-structural protein NS3 (Segment-10), found in Camelus dromedarius (Dromedary).